A 1066-amino-acid chain; its full sequence is E3 ubiquitin-protein ligase PDZRN3 (1066 aa).

The segment at C18 to C56 adopts an RING-type; degenerate zinc-finger fold. The TRAF-type zinc-finger motif lies at E100–G158. 2 PDZ domains span residues T249 to T339 and E419 to P503. S427 is subject to Phosphoserine. The tract at residues Q545–Q603 is disordered. A compositionally biased stretch (polar residues) spans T554–N563. A compositionally biased stretch (basic and acidic residues) spans Q564–E582. The segment covering T594 to Q603 has biased composition (polar residues). Residues E679–R704 adopt a coiled-coil conformation. The span at T744–S754 shows a compositional bias: basic and acidic residues. Disordered regions lie at residues T744–S778 and L808–Y863. 2 stretches are compositionally biased toward polar residues: residues S755–L769 and G845–L855. Residues K975–M1025 are a coiled coil.

As to quaternary structure, interacts with NLGN1 and EFNB2. Interacts with UBE2D2 and with MUSK via the first PDZ domain. In terms of processing, auto-ubiquitinated. In terms of tissue distribution, widely expressed, including in the heart, skeletal muscle and liver and, at lower levels, in the brain, colon, small intestine, placenta and lung. Down-regulated in ovarian serous papillary tumors.

The protein resides in the synapse. The protein localises to the cytoplasm. The catalysed reaction is S-ubiquitinyl-[E2 ubiquitin-conjugating enzyme]-L-cysteine + [acceptor protein]-L-lysine = [E2 ubiquitin-conjugating enzyme]-L-cysteine + N(6)-ubiquitinyl-[acceptor protein]-L-lysine.. It functions in the pathway protein modification; protein ubiquitination. Functionally, E3 ubiquitin-protein ligase. Plays an important role in regulating the surface level of MUSK on myotubes. Mediates the ubiquitination of MUSK, promoting its endocytosis and lysosomal degradation. Might contribute to terminal myogenic differentiation. The sequence is that of E3 ubiquitin-protein ligase PDZRN3 (PDZRN3) from Homo sapiens (Human).